Here is a 535-residue protein sequence, read N- to C-terminus: Expansin-like protein 9 (535 aa).

The N-terminal stretch at 1–25 (MKINKNNYFKIIIFIIYVIINLINA) is a signal peptide. Residue Asn24 is glycosylated (N-linked (GlcNAc...) asparagine). Over 26 to 514 (SDNVKLSNCG…DNSSNILLFS (489 aa)) the chain is Extracellular. One can recognise an Expansin-like EG45 domain in the interval 31–144 (LSNCGQARAE…QEVSCGFLGN (114 aa)). 2 disulfides stabilise this stretch: Cys34–Cys75 and Cys78–Cys139. Asn122, Asn257, and Asn292 each carry an N-linked (GlcNAc...) asparagine glycan. The segment at 459-487 (VDGSSNDDDGTGGTGGGASNKVGKRVDGE) is disordered. N-linked (GlcNAc...) asparagine glycosylation occurs at Asn506. A helical membrane pass occupies residues 515 to 535 (FNITLTFLLLSLIINILLLLF).

It belongs to the expansin family. Expansin A subfamily.

The protein resides in the membrane. In terms of biological role, may serve to lubricate the movement of the cellulose microfibrils during cell growth and wall extension and/or may serve to maintain the fluid state of the slug cell wall. This chain is Expansin-like protein 9 (expl9), found in Dictyostelium discoideum (Social amoeba).